The primary structure comprises 255 residues: 1-(5-phosphoribosyl)-5-[(5-phosphoribosylamino)methylideneamino] imidazole-4-carboxamide isomerase (255 aa).

Residue Asp-8 is the Proton acceptor of the active site. The active-site Proton donor is Asp-129.

Belongs to the HisA/HisF family.

Its subcellular location is the cytoplasm. The enzyme catalyses 1-(5-phospho-beta-D-ribosyl)-5-[(5-phospho-beta-D-ribosylamino)methylideneamino]imidazole-4-carboxamide = 5-[(5-phospho-1-deoxy-D-ribulos-1-ylimino)methylamino]-1-(5-phospho-beta-D-ribosyl)imidazole-4-carboxamide. It participates in amino-acid biosynthesis; L-histidine biosynthesis; L-histidine from 5-phospho-alpha-D-ribose 1-diphosphate: step 4/9. In Gloeobacter violaceus (strain ATCC 29082 / PCC 7421), this protein is 1-(5-phosphoribosyl)-5-[(5-phosphoribosylamino)methylideneamino] imidazole-4-carboxamide isomerase.